Consider the following 82-residue polypeptide: Small ribosomal subunit protein bS16 (82 aa).

This sequence belongs to the bacterial ribosomal protein bS16 family.

In Synechocystis sp. (strain ATCC 27184 / PCC 6803 / Kazusa), this protein is Small ribosomal subunit protein bS16.